The chain runs to 918 residues: E3 ubiquitin-protein ligase CBL-B-A (918 aa).

The span at 1–18 shows a compositional bias: low complexity; sequence MASGSGSSSSTSSSALSG. Residues 1–27 form a disordered region; the sequence is MASGSGSSSSTSSSALSGRLPGSRSAN. The 4H stretch occupies residues 46-178; the sequence is PPKQAAADRR…KAIFPSGQFQ (133 aa). Positions 46 to 354 constitute a Cbl-PTB domain; it reads PPKQAAADRR…GRSYNPDLTG (309 aa). The tract at residues 179-251 is EF-hand-like; that stretch reads GDNFRITKAD…FEFDIFTRLF (73 aa). Ca(2+)-binding residues include Asp232, Thr234, Asn236, Tyr238, and Glu243. The SH2-like stretch occupies residues 252 to 354; it reads QPWGSILRNW…GRSYNPDLTG (103 aa). Arg297 lines the 4-O-phospho-L-tyrosine pocket. The interval 355-383 is linker; the sequence is LCEPTPHDHIKVTQEQYELYCEMGSTFQL. The RING-type zinc finger occupies 384 to 423; the sequence is CKICAENDKDVKIEPCGHLMCTSCLTSWQESDGQGCPFCR. 3 disordered regions span residues 481-582, 780-831, and 857-918; these read NERQ…RTCR, FPPA…PPAR, and HSDP…MRPT. Over residues 483-497 the composition is skewed to polar residues; that stretch reads RQNSPVTSPGSSPLS. 2 stretches are compositionally biased toward pro residues: residues 554-576 and 821-830; these read LPAP…PIPP and PSQPPPPPPA. Residues 898–918 show a composition bias toward polar residues; that stretch reads KASNTKGELLLPNQNLIMRPT.

As to quaternary structure, interacts with several SH3 domain-containing proteins and with poly-ubiquitinated proteins.

Its subcellular location is the cytoplasm. The enzyme catalyses S-ubiquitinyl-[E2 ubiquitin-conjugating enzyme]-L-cysteine + [acceptor protein]-L-lysine = [E2 ubiquitin-conjugating enzyme]-L-cysteine + N(6)-ubiquitinyl-[acceptor protein]-L-lysine.. Its pathway is protein modification; protein ubiquitination. In terms of biological role, E3 ubiquitin-protein ligase which accepts ubiquitin from specific E2 ubiquitin-conjugating enzymes, and transfers it to substrates, generally promoting their degradation by the proteasome. This Xenopus laevis (African clawed frog) protein is E3 ubiquitin-protein ligase CBL-B-A (cblb-a).